The following is a 179-amino-acid chain: Large ribosomal subunit protein uL6 (179 aa).

Belongs to the universal ribosomal protein uL6 family. Part of the 50S ribosomal subunit.

This protein binds to the 23S rRNA, and is important in its secondary structure. It is located near the subunit interface in the base of the L7/L12 stalk, and near the tRNA binding site of the peptidyltransferase center. The chain is Large ribosomal subunit protein uL6 from Metamycoplasma arthritidis (strain 158L3-1) (Mycoplasma arthritidis).